Here is a 79-residue protein sequence, read N- to C-terminus: Small ribosomal subunit protein bS18 (79 aa).

The protein belongs to the bacterial ribosomal protein bS18 family. Part of the 30S ribosomal subunit. Forms a tight heterodimer with protein bS6.

Binds as a heterodimer with protein bS6 to the central domain of the 16S rRNA, where it helps stabilize the platform of the 30S subunit. The chain is Small ribosomal subunit protein bS18 (rpsR) from Bacillus subtilis (strain 168).